Here is a 225-residue protein sequence, read N- to C-terminus: MTQNLERLQRQIGYQFNQPALLKQALTHRSAAVKHNERLEFLGDAILNFIIAEALYHQFPKCNEGELSRMRATLVREPTLASLARQFELGDYLSLGPGELKSGGFRRESILADCVEAIIGAISLDSDLATTTKIVQHWYQAQLKQIQPGDNQKDPKTRLQEYLQGKRLPLPTYNVVEIKGEAHCQTFTVECYVKNIDRTFMGSGASRRKAEQAAAEKILQLLEMK.

In terms of domain architecture, RNase III spans 5–127 (LERLQRQIGY…IIGAISLDSD (123 aa)). A Mg(2+)-binding site is contributed by Glu40. The active site involves Asp44. 2 residues coordinate Mg(2+): Asp113 and Glu116. Glu116 is an active-site residue. The 71-residue stretch at 154–224 (DPKTRLQEYL…AEKILQLLEM (71 aa)) folds into the DRBM domain.

Belongs to the ribonuclease III family. Homodimer. The cofactor is Mg(2+).

Its subcellular location is the cytoplasm. The enzyme catalyses Endonucleolytic cleavage to 5'-phosphomonoester.. Digests double-stranded RNA. Involved in the processing of primary rRNA transcript to yield the immediate precursors to the large and small rRNAs (23S and 16S). Also processes some mRNAs, and tRNAs when they are encoded in the rRNA operon. In terms of biological role, CRISPR (clustered regularly interspaced short palindromic repeat) is an adaptive immune system that provides protection against mobile genetic elements (viruses, transposable elements and conjugative plasmids). CRISPR clusters contain spacers, sequences complementary to antecedent mobile elements, and target invading nucleic acids. CRISPR clusters are transcribed and processed into CRISPR RNA (crRNA). In this organism endogenous ribonuclease 3 and Cas9 are required for correct coprocessing of pre-crRNA and the trans-encoded small RNA (tracrRNA). Cas9, crRNA and tracrRNA are required for cleavage of invading DNA. Complements pre-crRNA and tracrRNA coprocessing defects in an rnc deletion in S.pyogenes strain 370. The protein is Ribonuclease 3 of Pasteurella multocida (strain Pm70).